The sequence spans 256 residues: Imidazole glycerol phosphate synthase subunit HisF (256 aa).

Catalysis depends on residues D12 and D131.

The protein belongs to the HisA/HisF family. In terms of assembly, heterodimer of HisH and HisF.

It is found in the cytoplasm. The catalysed reaction is 5-[(5-phospho-1-deoxy-D-ribulos-1-ylimino)methylamino]-1-(5-phospho-beta-D-ribosyl)imidazole-4-carboxamide + L-glutamine = D-erythro-1-(imidazol-4-yl)glycerol 3-phosphate + 5-amino-1-(5-phospho-beta-D-ribosyl)imidazole-4-carboxamide + L-glutamate + H(+). It functions in the pathway amino-acid biosynthesis; L-histidine biosynthesis; L-histidine from 5-phospho-alpha-D-ribose 1-diphosphate: step 5/9. Functionally, IGPS catalyzes the conversion of PRFAR and glutamine to IGP, AICAR and glutamate. The HisF subunit catalyzes the cyclization activity that produces IGP and AICAR from PRFAR using the ammonia provided by the HisH subunit. The sequence is that of Imidazole glycerol phosphate synthase subunit HisF from Pseudomonas fluorescens (strain ATCC BAA-477 / NRRL B-23932 / Pf-5).